The sequence spans 615 residues: Protein ENHANCED DISEASE RESISTANCE 4 (615 aa).

Disordered regions lie at residues 46 to 271, 292 to 336, and 549 to 592; these read IAPS…DDDE, YKEQ…GRQG, and THDI…RGSP. 2 stretches are compositionally biased toward polar residues: residues 63 to 89 and 119 to 129; these read NEPQ…SSPG and GDGTNEIQEQE. Residues 104 to 129 adopt a coiled-coil conformation; sequence MESTEKELDDLELSNGDGTNEIQEQE. The segment covering 134-148 has biased composition (basic and acidic residues); it reads DSEKNEREDNSRLES. Positions 159-168 are enriched in low complexity; the sequence is GSGSSSGSLS. Composition is skewed to polar residues over residues 296–314 and 552–564; these read GASS…ITTY and INAN…TSES. A compositionally biased stretch (basic and acidic residues) spans 565–577; it reads PIDKAPSKPEKLR.

In terms of assembly, interacts with RLK902. Binds and recruits EDR1 at the powdery mildew (e.g. G.cichoracearum) penetration site on the plasma membrane. Interacts with CHC2. In terms of tissue distribution, expressed in stems and rosette leaves, and weakly in inflorescences. Not detected in roots.

The protein localises to the cell membrane. Its subcellular location is the endosome. Functionally, plays a negative role in salicylic acid (SA)-mediated resistance to powdery mildew (e.g. Golovinomyces cichoracearum). May modulate plant immunity by regulating the relocation of EDR1 by interacting with CHC2 and modulating endocytosis. The protein is Protein ENHANCED DISEASE RESISTANCE 4 of Arabidopsis thaliana (Mouse-ear cress).